Consider the following 61-residue polypeptide: Small ribosomal subunit protein uS14 (61 aa).

Zn(2+) contacts are provided by Cys24, Cys27, Cys40, and Cys43.

The protein belongs to the universal ribosomal protein uS14 family. Zinc-binding uS14 subfamily. Part of the 30S ribosomal subunit. Contacts proteins S3 and S10. The cofactor is Zn(2+).

In terms of biological role, binds 16S rRNA, required for the assembly of 30S particles and may also be responsible for determining the conformation of the 16S rRNA at the A site. This chain is Small ribosomal subunit protein uS14, found in Clostridioides difficile (strain 630) (Peptoclostridium difficile).